The chain runs to 342 residues: MLASSPMLLFLLSLLMAYNFDTTAGQIGVCFGQMGNNIPNPSEVVAMFKQYSIPRMRMYGPNPDALNALRGSNIEFILDVPNGDLKRLADSQAEANTWVRDNVQKYNDVRFKYISVGNEVKPGEPGAAALIQAMQNIDRALSAAGLSNIKVSTTTFMGPSRNTYPPSRGRFKDEYRNFLQPVIGFLVNKRSPLLVNIYTYFGYMNRDVSLQFALLQPNSNNEFTDPNNQLRYLNFFDANLDSVYAALEKSGGGSLDVVVSESGWPTQGGPGASVPNAEAYVNNLRLHVNKNGSPKRQEAIETYIFAMFDEAPRQTSPNDEYEKYWGMFSPTTRQLKYGVKFN.

Positions Met1–Gln26 are cleaved as a signal peptide. Catalysis depends on Glu119, which acts as the Proton donor. Glu261 serves as the catalytic Nucleophile.

The protein belongs to the glycosyl hydrolase 17 family. In terms of processing, the N-terminus is blocked.

It is found in the vacuole. The enzyme catalyses Hydrolysis of (1-&gt;3)-beta-D-glucosidic linkages in (1-&gt;3)-beta-D-glucans.. Functionally, is thought to be an important plant defense-related product against fungal pathogens. Accumulation of the glucanase can be detected as early as 4 hours after inoculation. This Brassica campestris (Field mustard) protein is Glucan endo-1,3-beta-glucosidase (BGL).